Reading from the N-terminus, the 93-residue chain is Large ribosomal subunit protein eL29 (93 aa).

Basic residues predominate over residues 1–31 (MAKSKNHSTHHKNRKDHRNGIKKAVVHKKTS). The interval 1–33 (MAKSKNHSTHHKNRKDHRNGIKKAVVHKKTSSK) is disordered.

This sequence belongs to the eukaryotic ribosomal protein eL29 family.

This chain is Large ribosomal subunit protein eL29 (rpl29), found in Dictyostelium discoideum (Social amoeba).